A 474-amino-acid chain; its full sequence is MSKQFDVLVIGAGPGGYIAAIRAGQLGLNVACCEGNPYDDPKGEARLGGTCLNVGCIPSKALLASSEEFENVQHHLGDHGITVGDVKVDVAKMLKRKDDIVGKMTKGIEFLFRKNKVTLLKGYGKFVGKSAEGFQVDVAGEVVTAKQVIIATGSKARHLPGIKVDNDLVSDNEGALKFPAVPKKLGVIGAGVIGLELGSVWRRLGSDVTVLEALPAFLGAADEGVAKEAQKQLTKQGLKFSLGVNVNEVTTGKNGVTVKYTDKDGKAQTLEVDRLIVSVGRVPNTDNLGLDAVGLAADQRGFIEVDDHCATKVPGLWAIGDVVRGPMLAHKAEDEGVAVAERIAGQKPHIDYNCVPWVIYTFPEIAWVGKTEAQLKAEGREYKAGQFPFMANGRALGMGHADGFVKMLADAKTDEILGVHIVAANASDLIAEAVVAMEFKAASEDIGRVCHPHPSMSEVMREAALAVDKRQLNM.

FAD contacts are provided by residues 34–51, Lys-60, and Gly-124; that span reads EGNPYDDPKGEARLGGTC. The cysteines at positions 51 and 56 are disulfide-linked. Residues 189–193, Glu-212, Val-246, and 278–281 contribute to the NAD(+) site; these read GAGVI and SVGR. Positions 321 and 329 each coordinate FAD. Catalysis depends on His-453, which acts as the Proton acceptor.

The protein belongs to the class-I pyridine nucleotide-disulfide oxidoreductase family. It depends on FAD as a cofactor.

It is found in the cytoplasm. The enzyme catalyses N(6)-[(R)-dihydrolipoyl]-L-lysyl-[protein] + NAD(+) = N(6)-[(R)-lipoyl]-L-lysyl-[protein] + NADH + H(+). Functionally, the branched-chain alpha-keto dehydrogenase complex catalyzes the overall conversion of alpha-keto acids to acyl-CoA and CO(2). It contains multiple copies of 3 enzymatic components: branched-chain alpha-keto acid decarboxylase (E1), lipoamide acyltransferase (E2) and lipoamide dehydrogenase (E3). In Cupriavidus necator (strain ATCC 17699 / DSM 428 / KCTC 22496 / NCIMB 10442 / H16 / Stanier 337) (Ralstonia eutropha), this protein is Dihydrolipoyl dehydrogenase (odhL).